Here is a 757-residue protein sequence, read N- to C-terminus: Endonuclease MutS2 (757 aa).

321–328 (GPNMGGKT) lines the ATP pocket. The Smr domain maps to 681–756 (IDIRGMTVEE…GTGVTVVEVK (76 aa)).

It belongs to the DNA mismatch repair MutS family. MutS2 subfamily. In terms of assembly, homodimer. Binds to stalled ribosomes, contacting rRNA. Interacts with MutL.

With respect to regulation, nuclease activity is stimulated by interaction with MutL and inhibited in the presence of non-hydrolytic ATP (ADPnP). ATPase activity is stimulated by DNA. Its function is as follows. Endonuclease that is involved in the suppression of homologous recombination and thus may have a key role in the control of bacterial genetic diversity. Has ATPase activity. Binds to DNA. Functionally, acts as a ribosome collision sensor, splitting the ribosome into its 2 subunits. Detects stalled/collided 70S ribosomes which it binds and splits by an ATP-hydrolysis driven conformational change. Acts upstream of the ribosome quality control system (RQC), a ribosome-associated complex that mediates the extraction of incompletely synthesized nascent chains from stalled ribosomes and their subsequent degradation. Probably generates substrates for RQC. The polypeptide is Endonuclease MutS2 (Thermotoga maritima (strain ATCC 43589 / DSM 3109 / JCM 10099 / NBRC 100826 / MSB8)).